The primary structure comprises 217 residues: Pyridoxine/pyridoxamine 5'-phosphate oxidase (217 aa).

Substrate-binding positions include 13 to 16 (RRDY) and lysine 71. FMN is bound by residues 66-71 (RIVLLK), 81-82 (YT), lysine 88, and glutamine 110. The substrate site is built by tyrosine 128, arginine 132, and serine 136. FMN contacts are provided by residues 145–146 (QS) and tryptophan 190. 196–198 (RLH) is a substrate binding site. Position 200 (arginine 200) interacts with FMN.

Belongs to the pyridoxamine 5'-phosphate oxidase family. As to quaternary structure, homodimer. FMN serves as cofactor.

It carries out the reaction pyridoxamine 5'-phosphate + O2 + H2O = pyridoxal 5'-phosphate + H2O2 + NH4(+). The catalysed reaction is pyridoxine 5'-phosphate + O2 = pyridoxal 5'-phosphate + H2O2. It participates in cofactor metabolism; pyridoxal 5'-phosphate salvage; pyridoxal 5'-phosphate from pyridoxamine 5'-phosphate: step 1/1. Its pathway is cofactor metabolism; pyridoxal 5'-phosphate salvage; pyridoxal 5'-phosphate from pyridoxine 5'-phosphate: step 1/1. Functionally, catalyzes the oxidation of either pyridoxine 5'-phosphate (PNP) or pyridoxamine 5'-phosphate (PMP) into pyridoxal 5'-phosphate (PLP). This is Pyridoxine/pyridoxamine 5'-phosphate oxidase from Edwardsiella ictaluri (strain 93-146).